The following is a 225-amino-acid chain: RNA-binding protein 24 (225 aa).

The RRM domain occupies 11–88; it reads TKIFVGGLPY…RKANVNLAYL (78 aa).

The protein resides in the nucleus. It is found in the cytoplasm. Multifunctional RNA-binding protein involved in the regulation of pre-mRNA splicing, mRNA stability and mRNA translation important for cell fate decision and differentiation. Plays a major role in pre-mRNA alternative splicing regulation. Mediates preferentially muscle-specific exon inclusion in numerous mRNAs important for striated cardiac and skeletal muscle cell differentiation. Binds to intronic splicing enhancer (ISE) composed of stretches of GU-rich motifs localized in flanking intron of exon that will be included by alternative splicing. Involved in embryonic stem cell (ESC) transition to cardiac cell differentiation by promoting pre-mRNA alternative splicing events of several pluripotency and/or differentiation genes. Plays a role in the regulation of mRNA stability and mRNA translation to which it is bound. Involved in myogenic differentiation by regulating MYOG levels. Binds to a huge amount of mRNAs. Involved in embryonic heart development and myogenic differentiation of somitic muscle progenitors. The polypeptide is RNA-binding protein 24 (Gallus gallus (Chicken)).